We begin with the raw amino-acid sequence, 274 residues long: Ribosomal RNA small subunit methyltransferase A (274 aa).

Residues asparagine 28, leucine 30, glycine 55, glutamate 77, aspartate 103, and asparagine 122 each coordinate S-adenosyl-L-methionine.

This sequence belongs to the class I-like SAM-binding methyltransferase superfamily. rRNA adenine N(6)-methyltransferase family. RsmA subfamily.

It localises to the cytoplasm. The catalysed reaction is adenosine(1518)/adenosine(1519) in 16S rRNA + 4 S-adenosyl-L-methionine = N(6)-dimethyladenosine(1518)/N(6)-dimethyladenosine(1519) in 16S rRNA + 4 S-adenosyl-L-homocysteine + 4 H(+). Specifically dimethylates two adjacent adenosines (A1518 and A1519) in the loop of a conserved hairpin near the 3'-end of 16S rRNA in the 30S particle. May play a critical role in biogenesis of 30S subunits. The polypeptide is Ribosomal RNA small subunit methyltransferase A (Rhizobium meliloti (strain 1021) (Ensifer meliloti)).